The primary structure comprises 211 residues: Large ribosomal subunit protein uL3 (211 aa).

Residues 135–155 are disordered; it reads THGNSLSHRAPGSIGQNQSPG. The residue at position 152 (Q152) is an N5-methylglutamine.

It belongs to the universal ribosomal protein uL3 family. Part of the 50S ribosomal subunit. Forms a cluster with proteins L14 and L19. Methylated by PrmB.

Its function is as follows. One of the primary rRNA binding proteins, it binds directly near the 3'-end of the 23S rRNA, where it nucleates assembly of the 50S subunit. The sequence is that of Large ribosomal subunit protein uL3 from Pseudoalteromonas translucida (strain TAC 125).